The following is a 217-amino-acid chain: MKFFVDSANIEEIRELQNLSLVDGVTTNPSLILNSGRNILEVTKEICSLVKGPVSAEVAATEFEDMMKEAAVLAKVADNICIKLPLTLDGLKACKALTAEGLKTNLTLCFSANQALLAAKAGATFVSPFIGRLDDCGINGSELLHEIRTIYDNYNFETQILAASIRTVSHVKEAALSGADVATVPPAILKALITHPLTDKGLQIFLNDWKKTGQNIA.

Residue Lys83 is the Schiff-base intermediate with substrate of the active site.

The protein belongs to the transaldolase family. Type 3B subfamily.

It localises to the cytoplasm. It carries out the reaction D-sedoheptulose 7-phosphate + D-glyceraldehyde 3-phosphate = D-erythrose 4-phosphate + beta-D-fructose 6-phosphate. It participates in carbohydrate degradation; pentose phosphate pathway; D-glyceraldehyde 3-phosphate and beta-D-fructose 6-phosphate from D-ribose 5-phosphate and D-xylulose 5-phosphate (non-oxidative stage): step 2/3. Functionally, transaldolase is important for the balance of metabolites in the pentose-phosphate pathway. The sequence is that of Probable transaldolase from Bartonella tribocorum (strain CIP 105476 / IBS 506).